The following is a 350-amino-acid chain: Beta-ketoacyl-[acyl-carrier-protein] synthase III (350 aa).

Residues Cys120 and His256 contribute to the active site. Residues 257-261 (QANVR) are ACP-binding. Asn286 is an active-site residue.

The protein belongs to the thiolase-like superfamily. FabH family. As to quaternary structure, homodimer.

The protein localises to the cytoplasm. It catalyses the reaction malonyl-[ACP] + acetyl-CoA + H(+) = 3-oxobutanoyl-[ACP] + CO2 + CoA. It participates in lipid metabolism; fatty acid biosynthesis. Catalyzes the condensation reaction of fatty acid synthesis by the addition to an acyl acceptor of two carbons from malonyl-ACP. Catalyzes the first condensation reaction which initiates fatty acid synthesis and may therefore play a role in governing the total rate of fatty acid production. Possesses both acetoacetyl-ACP synthase and acetyl transacylase activities. Its substrate specificity determines the biosynthesis of branched-chain and/or straight-chain of fatty acids. The protein is Beta-ketoacyl-[acyl-carrier-protein] synthase III of Deinococcus deserti (strain DSM 17065 / CIP 109153 / LMG 22923 / VCD115).